Reading from the N-terminus, the 154-residue chain is Cytochrome c' (154 aa).

Residues 1-23 form the signal peptide; it reads MKHVLASTAAGLMALGLASSAIA. Residues Arg-35, Gln-36, Arg-95, Cys-144, Cys-147, and His-148 each coordinate heme c.

Homodimer. Binds 1 heme c group covalently per subunit.

Cytochrome c' is the most widely occurring bacterial c-type cytochrome. Cytochromes c' are high-spin proteins and the heme has no sixth ligand. Their exact function is not known. This is Cytochrome c' (cycA) from Allochromatium vinosum (strain ATCC 17899 / DSM 180 / NBRC 103801 / NCIMB 10441 / D) (Chromatium vinosum).